The sequence spans 113 residues: Large ribosomal subunit protein P2 (113 aa).

The interval 66–113 (PVGGGGAVAAADAAPAAAAGGDKKEAKKEEKKEESESEDDDMGFALFE) is disordered. Low complexity predominate over residues 73–85 (VAAADAAPAAAAG). The segment covering 86-99 (GDKKEAKKEEKKEE) has biased composition (basic and acidic residues). Phosphoserine is present on residues Ser-100 and Ser-102.

The protein belongs to the eukaryotic ribosomal protein P1/P2 family. As to quaternary structure, P1 and P2 exist as dimers at the large ribosomal subunit.

Functionally, plays an important role in the elongation step of protein synthesis. In Drosophila melanogaster (Fruit fly), this protein is Large ribosomal subunit protein P2 (RpLP2).